The primary structure comprises 540 residues: Zinc finger CCCH domain-containing protein 46 (540 aa).

The C3H1-type zinc finger occupies 148 to 175 (GFGGVPCSYFARGFCKNGASCRFVHSDG). The RRM domain maps to 258 to 334 (RQIYLTFPAD…RVLVKPYKEK (77 aa)). Composition is skewed to basic and acidic residues over residues 337-351 (VPDK…EREL) and 436-450 (EYDG…SKEG). 3 disordered regions span residues 337-365 (VPDK…DVLG), 436-469 (EYDG…LPDS), and 490-514 (SDLW…SFNS). Residue Ser451 is modified to Phosphoserine. Over residues 490 to 511 (SDLWSPSSDNDDNSTPSTLSDS) the composition is skewed to low complexity.

In terms of biological role, possesses RNA-binding and ribonuclease activities in vitro. This Arabidopsis thaliana (Mouse-ear cress) protein is Zinc finger CCCH domain-containing protein 46.